The primary structure comprises 629 residues: Hemocyanin G chain (629 aa).

The Cu cation site is built by H171, H175, H202, H322, H326, and H362. N-linked (GlcNAc...) asparagine glycosylation is found at N447 and N506. Cysteines 534 and 582 form a disulfide. N615 carries an N-linked (GlcNAc...) asparagine glycan.

It belongs to the tyrosinase family. Hemocyanin subfamily. Tarantula hemocyanin is a 24-chain polymer with seven different chains identified. As to expression, hemolymph.

The protein localises to the secreted. Its subcellular location is the extracellular space. Its function is as follows. Hemocyanins are copper-containing oxygen carriers occurring freely dissolved in the hemolymph of many mollusks and arthropods. The sequence is that of Hemocyanin G chain (HCG) from Aphonopelma sp. (American tarantula).